The sequence spans 674 residues: DNA mismatch repair protein MutL (674 aa).

It belongs to the DNA mismatch repair MutL/HexB family.

This protein is involved in the repair of mismatches in DNA. It is required for dam-dependent methyl-directed DNA mismatch repair. May act as a 'molecular matchmaker', a protein that promotes the formation of a stable complex between two or more DNA-binding proteins in an ATP-dependent manner without itself being part of a final effector complex. The protein is DNA mismatch repair protein MutL of Clostridium perfringens (strain 13 / Type A).